A 347-amino-acid chain; its full sequence is MNPLIMSIILATIILGTTIVMTGSHWLMIWIGFEMNMLAIIPMLMKQHNPRSTEAATKYFFTQATASMLLMLAGIINLMYSGQWTGVKLVNPTASIIMTLALAMKLGLAPFHFWVPEVTQGIPLSSGLILLTWQKLASMTGLYMISPGINLNMLMTMSMLSIAIGGWGGLNQTQLRKIMAYSSIAHMGWMTAILIYNPTMTLLNLVIYILMTTTMFMLFMINSSTTTLSLSHTWNKMPLITTTTLVTLLSMGGLPPLMGFLPKWMIIQEMTKNNNIVLPTIMAITALLNLFFYMRLTYATSLTMFPTTNNMKIKWQFENPKYLSLLTPMIMMSTLTLPLAPMMMILN.

11 helical membrane-spanning segments follow: residues 3–23 (PLIMSIILATIILGTTIVMTG), 25–45 (HWLMIWIGFEMNMLAIIPMLM), 59–79 (YFFTQATASMLLMLAGIINLM), 96–116 (IIMTLALAMKLGLAPFHFWVP), 127–147 (GLILLTWQKLASMTGLYMISP), 148–168 (GINLNMLMTMSMLSIAIGGWG), 178–198 (IMAYSSIAHMGWMTAILIYNP), 201–221 (TLLNLVIYILMTTTMFMLFMI), 247–267 (TLLSMGGLPPLMGFLPKWMII), 276–296 (IVLPTIMAITALLNLFFYMRL), and 325–345 (LLTPMIMMSTLTLPLAPMMMI).

This sequence belongs to the complex I subunit 2 family. Core subunit of respiratory chain NADH dehydrogenase (Complex I) which is composed of 45 different subunits. Interacts with TMEM242.

Its subcellular location is the mitochondrion inner membrane. It catalyses the reaction a ubiquinone + NADH + 5 H(+)(in) = a ubiquinol + NAD(+) + 4 H(+)(out). Core subunit of the mitochondrial membrane respiratory chain NADH dehydrogenase (Complex I) which catalyzes electron transfer from NADH through the respiratory chain, using ubiquinone as an electron acceptor. Essential for the catalytic activity and assembly of complex I. In Ozimops beccarii (Beccari's free-tailed bat), this protein is NADH-ubiquinone oxidoreductase chain 2.